Here is a 243-residue protein sequence, read N- to C-terminus: MYEVKLDAFNGPLDLLLHLIQKYEIDIYDIPMKSLTEQYMQYVHAMKQLEINVASEYLVMASELLMIKSKLLLPQHDVDDNLEEDPREDLVGRLIEYQNYKEYTQLLTEKKEEREHYFTKHPTDLSHLEKNVTWDECQTLDLTDLIVAYQRVKSRLALNKPKTVEIIKESFTIQQATEKVTTQLRHHTSFNFFSLFTFSEPIEQVVTHFLAILEMSKSGVINIEQVRSFDDIRIIRGVNFNIG.

This sequence belongs to the ScpA family. In terms of assembly, component of a cohesin-like complex composed of ScpA, ScpB and the Smc homodimer, in which ScpA and ScpB bind to the head domain of Smc. The presence of the three proteins is required for the association of the complex with DNA.

The protein resides in the cytoplasm. Functionally, participates in chromosomal partition during cell division. May act via the formation of a condensin-like complex containing Smc and ScpB that pull DNA away from mid-cell into both cell halves. The sequence is that of Segregation and condensation protein A from Staphylococcus haemolyticus (strain JCSC1435).